The following is a 159-amino-acid chain: MQQGWLSNWLVKHDVVHRSLGFDHRGVETLQIKAGDWDSIAVILYVYGYNYLRSQCAYDVAPGGSLASVYHLTRIQYGIDNPEEVCIKVFAQKDNPRIPSVFWVWRSADFQERESYDMVGISYDNHPRLKRILMPESWIGWPLRKDYITPNFYEIQDAH.

This sequence belongs to the complex I 30 kDa subunit family. In terms of assembly, NDH is composed of at least 16 different subunits, 5 of which are encoded in the nucleus. As to expression, leaves.

It is found in the plastid. The protein localises to the chloroplast thylakoid membrane. It carries out the reaction a plastoquinone + NADH + (n+1) H(+)(in) = a plastoquinol + NAD(+) + n H(+)(out). The enzyme catalyses a plastoquinone + NADPH + (n+1) H(+)(in) = a plastoquinol + NADP(+) + n H(+)(out). Its function is as follows. NDH shuttles electrons from NAD(P)H:plastoquinone, via FMN and iron-sulfur (Fe-S) centers, to quinones in the photosynthetic chain and possibly in a chloroplast respiratory chain. The immediate electron acceptor for the enzyme in this species is believed to be plastoquinone. Couples the redox reaction to proton translocation, and thus conserves the redox energy in a proton gradient. This is NAD(P)H-quinone oxidoreductase subunit J, chloroplastic from Zea mays (Maize).